Consider the following 432-residue polypeptide: Serine hydroxymethyltransferase (432 aa).

(6S)-5,6,7,8-tetrahydrofolate contacts are provided by residues Leu-131 and 135-137; that span reads GHL. Lys-240 is subject to N6-(pyridoxal phosphate)lysine.

The protein belongs to the SHMT family. Homodimer. The cofactor is pyridoxal 5'-phosphate.

It localises to the cytoplasm. It carries out the reaction (6R)-5,10-methylene-5,6,7,8-tetrahydrofolate + glycine + H2O = (6S)-5,6,7,8-tetrahydrofolate + L-serine. It functions in the pathway one-carbon metabolism; tetrahydrofolate interconversion. The protein operates within amino-acid biosynthesis; glycine biosynthesis; glycine from L-serine: step 1/1. In terms of biological role, catalyzes the reversible interconversion of serine and glycine with tetrahydrofolate (THF) serving as the one-carbon carrier. This reaction serves as the major source of one-carbon groups required for the biosynthesis of purines, thymidylate, methionine, and other important biomolecules. Also exhibits THF-independent aldolase activity toward beta-hydroxyamino acids, producing glycine and aldehydes, via a retro-aldol mechanism. This is Serine hydroxymethyltransferase from Bradyrhizobium diazoefficiens (strain JCM 10833 / BCRC 13528 / IAM 13628 / NBRC 14792 / USDA 110).